The following is a 218-amino-acid chain: Peptide methionine sulfoxide reductase MsrA (218 aa).

The active site involves C57.

The protein belongs to the MsrA Met sulfoxide reductase family.

It catalyses the reaction L-methionyl-[protein] + [thioredoxin]-disulfide + H2O = L-methionyl-(S)-S-oxide-[protein] + [thioredoxin]-dithiol. The catalysed reaction is [thioredoxin]-disulfide + L-methionine + H2O = L-methionine (S)-S-oxide + [thioredoxin]-dithiol. Its function is as follows. Has an important function as a repair enzyme for proteins that have been inactivated by oxidation. Catalyzes the reversible oxidation-reduction of methionine sulfoxide in proteins to methionine. The polypeptide is Peptide methionine sulfoxide reductase MsrA (Brucella abortus (strain S19)).